The sequence spans 94 residues: DNA-directed RNA polymerase subunit Rpo11 (94 aa).

This sequence belongs to the archaeal Rpo11/eukaryotic RPB11/RPC19 RNA polymerase subunit family. In terms of assembly, part of the RNA polymerase complex.

It localises to the cytoplasm. It catalyses the reaction RNA(n) + a ribonucleoside 5'-triphosphate = RNA(n+1) + diphosphate. Its function is as follows. DNA-dependent RNA polymerase (RNAP) catalyzes the transcription of DNA into RNA using the four ribonucleoside triphosphates as substrates. In Haloarcula marismortui (strain ATCC 43049 / DSM 3752 / JCM 8966 / VKM B-1809) (Halobacterium marismortui), this protein is DNA-directed RNA polymerase subunit Rpo11.